The chain runs to 193 residues: Xanthine phosphoribosyltransferase (193 aa).

Xanthine-binding residues include Leu20 and Thr27. Residue 128–132 (ANGQA) participates in 5-phospho-alpha-D-ribose 1-diphosphate binding. Xanthine is bound at residue Lys156.

The protein belongs to the purine/pyrimidine phosphoribosyltransferase family. Xpt subfamily. In terms of assembly, homodimer.

Its subcellular location is the cytoplasm. The enzyme catalyses XMP + diphosphate = xanthine + 5-phospho-alpha-D-ribose 1-diphosphate. It participates in purine metabolism; XMP biosynthesis via salvage pathway; XMP from xanthine: step 1/1. Its function is as follows. Converts the preformed base xanthine, a product of nucleic acid breakdown, to xanthosine 5'-monophosphate (XMP), so it can be reused for RNA or DNA synthesis. This chain is Xanthine phosphoribosyltransferase, found in Streptococcus uberis (strain ATCC BAA-854 / 0140J).